Consider the following 315-residue polypeptide: DNA-directed RNA polymerase subunit alpha (315 aa).

Residues 1–228 form an alpha N-terminal domain (alpha-NTD) region; the sequence is MLEIEKPKIE…EHFKLFMTLT (228 aa). Residues 245–315 form an alpha C-terminal domain (alpha-CTD) region; it reads KEKVLEMTIE…LGLSLKLNDE (71 aa).

It belongs to the RNA polymerase alpha chain family. As to quaternary structure, homodimer. The RNAP catalytic core consists of 2 alpha, 1 beta, 1 beta' and 1 omega subunit. When a sigma factor is associated with the core the holoenzyme is formed, which can initiate transcription.

The catalysed reaction is RNA(n) + a ribonucleoside 5'-triphosphate = RNA(n+1) + diphosphate. Functionally, DNA-dependent RNA polymerase catalyzes the transcription of DNA into RNA using the four ribonucleoside triphosphates as substrates. This chain is DNA-directed RNA polymerase subunit alpha, found in Clostridium acetobutylicum (strain ATCC 824 / DSM 792 / JCM 1419 / IAM 19013 / LMG 5710 / NBRC 13948 / NRRL B-527 / VKM B-1787 / 2291 / W).